The chain runs to 306 residues: Acetaldehyde dehydrogenase (306 aa).

An NAD(+)-binding site is contributed by 12–15; sequence SGNI. The active-site Acyl-thioester intermediate is cysteine 127. Residues 158–166 and asparagine 277 contribute to the NAD(+) site; that span reads SAGPGTRAN.

It belongs to the acetaldehyde dehydrogenase family.

The catalysed reaction is acetaldehyde + NAD(+) + CoA = acetyl-CoA + NADH + H(+). The polypeptide is Acetaldehyde dehydrogenase (Mycolicibacterium gilvum (strain PYR-GCK) (Mycobacterium gilvum (strain PYR-GCK))).